The sequence spans 174 residues: Crossover junction endodeoxyribonuclease RuvC (174 aa).

Residues D8, E68, and D140 contribute to the active site. D8, E68, and D140 together coordinate Mg(2+).

It belongs to the RuvC family. In terms of assembly, homodimer which binds Holliday junction (HJ) DNA. The HJ becomes 2-fold symmetrical on binding to RuvC with unstacked arms; it has a different conformation from HJ DNA in complex with RuvA. In the full resolvosome a probable DNA-RuvA(4)-RuvB(12)-RuvC(2) complex forms which resolves the HJ. It depends on Mg(2+) as a cofactor.

Its subcellular location is the cytoplasm. It carries out the reaction Endonucleolytic cleavage at a junction such as a reciprocal single-stranded crossover between two homologous DNA duplexes (Holliday junction).. In terms of biological role, the RuvA-RuvB-RuvC complex processes Holliday junction (HJ) DNA during genetic recombination and DNA repair. Endonuclease that resolves HJ intermediates. Cleaves cruciform DNA by making single-stranded nicks across the HJ at symmetrical positions within the homologous arms, yielding a 5'-phosphate and a 3'-hydroxyl group; requires a central core of homology in the junction. The consensus cleavage sequence is 5'-(A/T)TT(C/G)-3'. Cleavage occurs on the 3'-side of the TT dinucleotide at the point of strand exchange. HJ branch migration catalyzed by RuvA-RuvB allows RuvC to scan DNA until it finds its consensus sequence, where it cleaves and resolves the cruciform DNA. The chain is Crossover junction endodeoxyribonuclease RuvC from Legionella pneumophila (strain Corby).